The chain runs to 280 residues: Pantothenate synthetase (280 aa).

26–33 (MGNLHEGH) is a binding site for ATP. Catalysis depends on H33, which acts as the Proton donor. Residue Q57 coordinates (R)-pantoate. Q57 contributes to the beta-alanine binding site. ATP is bound at residue 145–148 (GKKD). Residue Q151 participates in (R)-pantoate binding. Residues V174 and 182 to 185 (LSSR) each bind ATP.

The protein belongs to the pantothenate synthetase family. Homodimer.

It localises to the cytoplasm. It carries out the reaction (R)-pantoate + beta-alanine + ATP = (R)-pantothenate + AMP + diphosphate + H(+). It participates in cofactor biosynthesis; (R)-pantothenate biosynthesis; (R)-pantothenate from (R)-pantoate and beta-alanine: step 1/1. Catalyzes the condensation of pantoate with beta-alanine in an ATP-dependent reaction via a pantoyl-adenylate intermediate. This is Pantothenate synthetase from Bordetella avium (strain 197N).